The sequence spans 336 residues: Fructose-1,6-bisphosphatase class 1 (336 aa).

Mg(2+) contacts are provided by Glu98, Asp117, Leu119, and Asp120. Substrate is bound by residues 120–123 (DGSS), Asn210, and Lys276. Glu282 provides a ligand contact to Mg(2+).

It belongs to the FBPase class 1 family. As to quaternary structure, homotetramer. It depends on Mg(2+) as a cofactor.

Its subcellular location is the cytoplasm. It carries out the reaction beta-D-fructose 1,6-bisphosphate + H2O = beta-D-fructose 6-phosphate + phosphate. The protein operates within carbohydrate biosynthesis; gluconeogenesis. The sequence is that of Fructose-1,6-bisphosphatase class 1 from Caulobacter vibrioides (strain ATCC 19089 / CIP 103742 / CB 15) (Caulobacter crescentus).